The following is a 122-amino-acid chain: Large ribosomal subunit protein uL22 (122 aa).

The interval 102-122 (VAEGKEMKSSKSHKKNQAEGK) is disordered.

It belongs to the universal ribosomal protein uL22 family. As to quaternary structure, part of the 50S ribosomal subunit.

Its function is as follows. This protein binds specifically to 23S rRNA; its binding is stimulated by other ribosomal proteins, e.g. L4, L17, and L20. It is important during the early stages of 50S assembly. It makes multiple contacts with different domains of the 23S rRNA in the assembled 50S subunit and ribosome. The globular domain of the protein is located near the polypeptide exit tunnel on the outside of the subunit, while an extended beta-hairpin is found that lines the wall of the exit tunnel in the center of the 70S ribosome. The polypeptide is Large ribosomal subunit protein uL22 (Helicobacter pylori (strain ATCC 700392 / 26695) (Campylobacter pylori)).